The sequence spans 2596 residues: Protein unc-79 homolog (2596 aa).

2 positions are modified to phosphoserine: serine 754 and serine 758. Disordered regions lie at residues 907–931 (GPEG…TVPS), 1539–1573 (SQRQ…GFQE), 1594–1632 (VDSP…DSDS), 1648–1679 (EEEE…SVLS), 1695–1832 (KDFS…FKIQ), and 1863–1909 (LGEQ…KQIQ). Residues 1594–1606 (VDSPGKPAPREDL) show a composition bias toward basic and acidic residues. The segment covering 1662 to 1679 (GNNAASSPSIPSQPSVLS) has biased composition (low complexity). Residues 1704 to 1713 (NHQSASNEDS) show a composition bias toward polar residues. Residues 1726–1735 (ELSKSEELRE) are compositionally biased toward basic and acidic residues. The segment covering 1897-1908 (ETSSHSSISKQI) has biased composition (polar residues). 2 helical membrane passes run 2184–2204 (LLSF…ELCG) and 2426–2446 (CVLH…WTVY).

Belongs to the unc-79 family. As to quaternary structure, NALCN complex consists of NALCN and auxiliary subunits, UNC79, UNC80 and NACL1. These auxiliary subunits are essential for the NALCN channel function. UNC80 bridges NALCN to UNC79. Interacts with NALCN. Interacts with UNC80.

It is found in the cell membrane. In terms of biological role, auxiliary subunit of the NALCN sodium channel complex. The NALCN sodium channel complex is a voltage-gated ion channel responsible for the resting Na(+) permeability that controls neuronal excitability. Activated by neuropeptides substance P, neurotensin, and extracellular calcium that regulates neuronal excitability by controlling the sizes of NALCN-dependent sodium-leak current. The protein is Protein unc-79 homolog (Unc79) of Mus musculus (Mouse).